A 1088-amino-acid polypeptide reads, in one-letter code: RNA-directed RNA polymerase (1088 aa).

A RdRp catalytic domain is found at 501-687; sequence LSYGDVTRFL…AKRYIAGGKI (187 aa).

It belongs to the reoviridae RNA-directed RNA polymerase family. Interacts with VP3 (Potential). Interacts with VP2; this interaction activates VP1. Interacts with NSP5; this interaction is probably necessary for the formation of functional virus factories. Interacts with NSP2; this interaction is weak. The cofactor is Mg(2+).

The protein resides in the virion. It catalyses the reaction RNA(n) + a ribonucleoside 5'-triphosphate = RNA(n+1) + diphosphate. Its function is as follows. RNA-directed RNA polymerase that is involved in both transcription and genome replication. Together with VP3 capping enzyme, forms an enzyme complex positioned near the channels situated at each of the five-fold vertices of the core. Following infection, the outermost layer of the virus is lost, leaving a double-layered particle (DLP) made up of the core and VP6 shell. VP1 then catalyzes the transcription of fully conservative plus-strand genomic RNAs that are extruded through the DLP's channels into the cytoplasm where they function as mRNAs for translation of viral proteins. One copy of each of the viral (+)RNAs is also recruited during core assembly, together with newly synthesized polymerase complexes and VP2. The polymerase of these novo-formed particles catalyzes the synthesis of complementary minus-strands leading to dsRNA formation. To do so, the polymerase specifically recognizes and binds 4 bases 5'-UGUG-3' in the conserved 3'-sequence of plus-strand RNA templates. VP2 presumably activates the autoinhibited VP1-RNA complex to coordinate packaging and genome replication. Once dsRNA synthesis is complete, the polymerase switches to the transcriptional mode, thus providing secondary transcription. The protein is RNA-directed RNA polymerase of Sus scrofa (Pig).